The primary structure comprises 75 residues: MAKKNIHPQWYEEAKFYCNGEIVKIIGSTRMEINADIWSGNHPFYIGTQKIVDTEGRIDKFIRKYNLNSENSESL.

The protein belongs to the bacterial ribosomal protein bL31 family. Type A subfamily. As to quaternary structure, part of the 50S ribosomal subunit.

The protein resides in the plastid. The protein localises to the chloroplast. Functionally, binds the 23S rRNA. The polypeptide is Large ribosomal subunit protein bL31c (Cyanidium caldarium (Red alga)).